The primary structure comprises 155 residues: Small ribosomal subunit protein uS7c (155 aa).

Belongs to the universal ribosomal protein uS7 family. As to quaternary structure, part of the 30S ribosomal subunit.

The protein resides in the plastid. It localises to the chloroplast. One of the primary rRNA binding proteins, it binds directly to 16S rRNA where it nucleates assembly of the head domain of the 30S subunit. The protein is Small ribosomal subunit protein uS7c (rps7) of Euonymus alatus (Burning bush).